The primary structure comprises 483 residues: Uridine/cytidine kinase UKL1, chloroplastic (483 aa).

Residues M1 to N47 constitute a chloroplast transit peptide. Residues P59–G264 are uridine kinase. The uracil phosphoribosyltransferase stretch occupies residues N274–E483. GTP is bound by residues K298, R307, and C341–L344. The 5-phospho-alpha-D-ribose 1-diphosphate site is built by R351 and R376. R396 provides a ligand contact to GTP. Residues D402, T407 to S410, and E473 each bind 5-phospho-alpha-D-ribose 1-diphosphate. A uracil-binding site is contributed by G472–F474.

It in the N-terminal section; belongs to the uridine kinase family. In the C-terminal section; belongs to the UPRTase family.

Its subcellular location is the plastid. It localises to the chloroplast. It catalyses the reaction cytidine + ATP = CMP + ADP + H(+). The enzyme catalyses uridine + ATP = UMP + ADP + H(+). The protein operates within pyrimidine metabolism; CTP biosynthesis via salvage pathway; CTP from cytidine: step 1/3. It functions in the pathway pyrimidine metabolism; UMP biosynthesis via salvage pathway; UMP from uridine: step 1/1. Functionally, involved in the pyrimidine salvage pathway. Phosphorylates uridine to uridine monophosphate (UMP). Phosphorylates cytidine to cytidine monophosphate (CMP). Does not possess uracil phosphoribosyltransferase (UPRTase) activity that catalyzes the conversion of uracil and 5-phospho-alpha-D-ribose 1-diphosphate (PRPP) to UMP and diphosphate. This is Uridine/cytidine kinase UKL1, chloroplastic from Arabidopsis thaliana (Mouse-ear cress).